The primary structure comprises 117 residues: uncharacterized protein (117 aa).

Residues 1-19 (MTSNPSSSADQPLSGTTVP) show a composition bias toward polar residues. Positions 1–28 (MTSNPSSSADQPLSGTTVPGSVPGKAPE) are disordered. A run of 2 helical transmembrane segments spans residues 38-58 (AAVW…LIFI) and 76-96 (LPLG…TVFA).

It localises to the cell membrane. This is an uncharacterized protein from Mycobacterium tuberculosis (strain ATCC 25618 / H37Rv).